A 169-amino-acid polypeptide reads, in one-letter code: Ribosome maturation factor RimM (169 aa).

Residues 94 to 167 (ENEFYFHEII…KITIEVMEGL (74 aa)) enclose the PRC barrel domain.

Belongs to the RimM family. As to quaternary structure, binds ribosomal protein uS19.

It is found in the cytoplasm. In terms of biological role, an accessory protein needed during the final step in the assembly of 30S ribosomal subunit, possibly for assembly of the head region. Essential for efficient processing of 16S rRNA. May be needed both before and after RbfA during the maturation of 16S rRNA. It has affinity for free ribosomal 30S subunits but not for 70S ribosomes. The polypeptide is Ribosome maturation factor RimM (Listeria welshimeri serovar 6b (strain ATCC 35897 / DSM 20650 / CCUG 15529 / CIP 8149 / NCTC 11857 / SLCC 5334 / V8)).